We begin with the raw amino-acid sequence, 267 residues long: Undecaprenyl-diphosphatase (267 aa).

7 helical membrane-spanning segments follow: residues 7–29 (LILGIIEGLTEFLPVSSTGHMIL), 41–61 (FWKSFLIIIQLGSILAVIFVF), 69–89 (LDIWLKLAAGFFPTGVIGLFV), 96–116 (LFNGWVVVGMLIFGGVVFILI), 173–193 (AAEFSFLLAIPTMIIATAYSI), 207–227 (IPLGIGFITAFVVAVLVIKFF), and 239–259 (FGIYRIILGFVFFYLYYSGIL).

This sequence belongs to the UppP family.

Its subcellular location is the cell inner membrane. It catalyses the reaction di-trans,octa-cis-undecaprenyl diphosphate + H2O = di-trans,octa-cis-undecaprenyl phosphate + phosphate + H(+). Functionally, catalyzes the dephosphorylation of undecaprenyl diphosphate (UPP). Confers resistance to bacitracin. The protein is Undecaprenyl-diphosphatase of Campylobacter jejuni subsp. jejuni serotype O:6 (strain 81116 / NCTC 11828).